The sequence spans 247 residues: Cell division protein ZapD (247 aa).

This sequence belongs to the ZapD family. As to quaternary structure, interacts with FtsZ.

The protein resides in the cytoplasm. Functionally, cell division factor that enhances FtsZ-ring assembly. Directly interacts with FtsZ and promotes bundling of FtsZ protofilaments, with a reduction in FtsZ GTPase activity. In Shigella flexneri, this protein is Cell division protein ZapD.